The chain runs to 117 residues: MRTLLIRYILWRNDGDPSYYNDDFEKLMLLDELVDDSDVCTLIKNMRMTLSDGPLLDRLNQPVNNVEDVKRMIAISAKVARDIGERPEIRWEESFTILFRMIETYFDDLMIDLYGEK.

The protein belongs to the poxviridae OPG035 family.

Functionally, bcl-2-like protein which contributes to virulence by preventing host NF-kappa-B activation in response to pro-inflammatory stimuli such as TNF-alpha or IL1B. This Homo sapiens (Human) protein is Protein OPG035 (OPG035).